Reading from the N-terminus, the 86-residue chain is Probable oxaloacetate decarboxylase gamma chain 1 (86 aa).

Residues 11 to 33 form a helical membrane-spanning segment; it reads AATLMVTGMAVVFLFLTLLVYLV.

It belongs to the OadG family. Heterotrimer of an alpha, a beta and a gamma subunit. Na(+) serves as cofactor.

Its subcellular location is the cell membrane. It catalyses the reaction oxaloacetate + 2 Na(+)(in) + H(+) = pyruvate + 2 Na(+)(out) + CO2. Its function is as follows. Catalyzes the decarboxylation of oxaloacetate coupled to Na(+) translocation. The polypeptide is Probable oxaloacetate decarboxylase gamma chain 1 (oadG1) (Vibrio cholerae serotype O1 (strain ATCC 39315 / El Tor Inaba N16961)).